The primary structure comprises 445 residues: Trigger factor (445 aa).

Residues 162–247 form the PPIase FKBP-type domain; that stretch reads GDQVTIDAIG…IKAVHTAEPT (86 aa).

Belongs to the FKBP-type PPIase family. Tig subfamily.

It is found in the cytoplasm. It carries out the reaction [protein]-peptidylproline (omega=180) = [protein]-peptidylproline (omega=0). Its function is as follows. Involved in protein export. Acts as a chaperone by maintaining the newly synthesized protein in an open conformation. Functions as a peptidyl-prolyl cis-trans isomerase. This is Trigger factor from Rickettsia peacockii (strain Rustic).